Here is a 256-residue protein sequence, read N- to C-terminus: Imidazole glycerol phosphate synthase subunit HisF (256 aa).

Active-site residues include Asp-12 and Asp-131.

This sequence belongs to the HisA/HisF family. In terms of assembly, heterodimer of HisH and HisF.

It is found in the cytoplasm. It carries out the reaction 5-[(5-phospho-1-deoxy-D-ribulos-1-ylimino)methylamino]-1-(5-phospho-beta-D-ribosyl)imidazole-4-carboxamide + L-glutamine = D-erythro-1-(imidazol-4-yl)glycerol 3-phosphate + 5-amino-1-(5-phospho-beta-D-ribosyl)imidazole-4-carboxamide + L-glutamate + H(+). The protein operates within amino-acid biosynthesis; L-histidine biosynthesis; L-histidine from 5-phospho-alpha-D-ribose 1-diphosphate: step 5/9. In terms of biological role, IGPS catalyzes the conversion of PRFAR and glutamine to IGP, AICAR and glutamate. The HisF subunit catalyzes the cyclization activity that produces IGP and AICAR from PRFAR using the ammonia provided by the HisH subunit. The chain is Imidazole glycerol phosphate synthase subunit HisF from Beutenbergia cavernae (strain ATCC BAA-8 / DSM 12333 / CCUG 43141 / JCM 11478 / NBRC 16432 / NCIMB 13614 / HKI 0122).